The sequence spans 386 residues: NADH-ubiquinone oxidoreductase 49 kDa subunit homolog (386 aa).

Belongs to the complex I 49 kDa subunit family.

It is found in the mitochondrion. It carries out the reaction a ubiquinone + NADH + 5 H(+)(in) = a ubiquinol + NAD(+) + 4 H(+)(out). In terms of biological role, core subunit of the mitochondrial membrane respiratory chain NADH dehydrogenase (Complex I) that is believed to belong to the minimal assembly required for catalysis. Complex I functions in the transfer of electrons from NADH to the respiratory chain. The immediate electron acceptor for the enzyme is believed to be ubiquinone. Component of the iron-sulfur (IP) fragment of the enzyme. Component of the iron-sulfur (IP) fragment of the enzyme. This is NADH-ubiquinone oxidoreductase 49 kDa subunit homolog (NAD7) from Trypanosoma brucei brucei.